Reading from the N-terminus, the 414-residue chain is tRNA (guanine-N(7)-)-methyltransferase non-catalytic subunit WDR4 (414 aa).

Residue Ala2 is modified to N-acetylalanine. WD repeat units lie at residues 60–99 (QGSD…CLSV), 101–140 (TVVR…GGGR), 144–184 (GHLS…IESF), and 187–227 (GHTE…ELHC). The tract at residues 377 to 414 (EERLQQQLEKKRRQAPPPGPNGPTKKMRAGELAQGCSS) is disordered.

It belongs to the WD repeat TRM82 family. In terms of assembly, non-catalytic component of the METTL1-WDR4 complex, composed of METTL1 and WDR4. Interacts with FEN1; the interaction is direct.

It is found in the nucleus. The protein localises to the chromosome. It participates in tRNA modification; N(7)-methylguanine-tRNA biosynthesis. In terms of biological role, non-catalytic component of the METTL1-WDR4 methyltransferase complex required for the formation of N(7)-methylguanine in a subset of RNA species, such as tRNAs, mRNAs and microRNAs (miRNAs). In the METTL1-WDR4 methyltransferase complex, WDR4 acts as a scaffold for tRNA-binding. Required for the formation of N(7)-methylguanine at position 46 (m7G46) in a large subset of tRNAs that contain the 5'-RAGGU-3' motif within the variable loop. M7G46 interacts with C13-G22 in the D-loop to stabilize tRNA tertiary structure and protect tRNAs from decay. Also required for the formation of N(7)-methylguanine at internal sites in a subset of mRNAs. Also required for methylation of a specific subset of miRNAs, such as let-7. Independently of METTL1, also plays a role in genome stability: localizes at the DNA replication site and regulates endonucleolytic activities of FEN1. This chain is tRNA (guanine-N(7)-)-methyltransferase non-catalytic subunit WDR4, found in Bos taurus (Bovine).